We begin with the raw amino-acid sequence, 417 residues long: Xylulose 5-phosphate/phosphate translocator, chloroplastic (417 aa).

The transit peptide at 1 to 82 directs the protein to the chloroplast; sequence MISLNLSPSL…GFSRKPRSIA (82 aa). The disordered stretch occupies residues 66–102; sequence TNPESSSGFSRKPRSIAAVGSSDSNPDEKSDLGEAEK. Ala83 carries the N-acetylalanine modification. The span at 91-102 shows a compositional bias: basic and acidic residues; sequence PDEKSDLGEAEK. Transmembrane regions (helical) follow at residues 109 to 129, 141 to 161, 173 to 193, 198 to 218, 225 to 245, 247 to 267, 287 to 307, 318 to 338, and 384 to 404; these read TLQLGIVFGLWYFQNIVFNIF, WLLASFQLFAGSIWMLVLWSF, FIIALLGPALFHTIGHISACV, VAVSFTHVIKSAEPVFSVIFS, YPLAVWLSILPIVMGCSLAAV, EVSFNLGGLSGAMISNVGFVL, LYGCISILSLLYLFPVAIFVE, AIASVGTPSTFYFWVLLSGVF, and LNALGSAIAIFGTFLYSQATA. The EamA domain occupies 127–243; the sequence is NIFNKKALNV…LPIVMGCSLA (117 aa).

Belongs to the TPT transporter family. TPT (TC 2.A.7.9) subfamily. Widely expressed.

Its subcellular location is the plastid. It localises to the chloroplast membrane. Functionally, sugar phosphate/phosphate translocator that transports inorganic phosphate, triose phosphate, 3-phosphoglycerate, xylulose 5-phosphate (Xul-5-P) and to a lesser extent ribulose 5-phosphate. Does not transport ribose 5-phosphate or hexose phosphates. Provides cytosolic Xul-5-P to the chloroplast, where it is used as an intermediate in the plastidic pentose phosphate pathways. The protein is Xylulose 5-phosphate/phosphate translocator, chloroplastic (XPT) of Arabidopsis thaliana (Mouse-ear cress).